We begin with the raw amino-acid sequence, 507 residues long: Myocyte-specific enhancer factor 2A (507 aa).

The 55-residue stretch at 3 to 57 (RKKIQITRIMDERNRQVTFTKRKFGLMKKAYELSVLCDCEIALIIFNSSNKLFQY) folds into the MADS-box domain. Residues 58-86 (ASTDMDKVLLKYTEYNEPHESGTNSDIVE) constitute a DNA-binding region (mef2-type). Serine 59 carries the phosphoserine; by CK2 modification. A phosphoserine mark is found at serine 98 and serine 235. The interval 175 to 269 (ADSSMLSPPQ…GGGNLGMNSR (95 aa)) is disordered. Polar residues predominate over residues 209-245 (LSTSDLTVPNGAGSSPVGNGFVNSRASPNLVGTTGAN). Residue lysine 249 is modified to N6-acetyllysine. At serine 255 the chain carries Phosphoserine. The segment at 266-283 (MNSRKPDLRVVIPPSSKG) is required for interaction with MAPKs. The tract at residues 289-296 (SEEEELEL) is beta domain. Phosphothreonine; by MAPK7 and MAPK14 occurs at positions 312 and 319. A Phosphoserine; by MAPK7 modification is found at serine 355. Polar residues predominate over residues 390-402 (SNLSINTNQNINI). The tract at residues 390–507 (SNLSINTNQN…KRMRMDAWVT (118 aa)) is disordered. At lysine 403 the chain carries N6-acetyllysine; alternate. A Glycyl lysine isopeptide (Lys-Gly) (interchain with G-Cter in SUMO); alternate cross-link involves residue lysine 403. A Phosphoserine; by CDK5 modification is found at serine 408. Threonine 415 bears the Phosphothreonine mark. The span at 423–443 (QPPPPSQAPQPQPPQPQPQPQ) shows a compositional bias: pro residues. Position 453 is a phosphoserine (serine 453). The segment covering 453–466 (SPVDSLSSSSSSYD) has biased composition (low complexity). Composition is skewed to basic and acidic residues over residues 467 to 477 (GSDREDPRGDF) and 488 to 507 (NTEDRESPSVKRMRMDAWVT).

This sequence belongs to the MEF2 family. Binds DNA as a homo- or heterodimer. Dimerizes with MEF2D. Interacts with HDAC7. Interacts with PIAS1; the interaction enhances sumoylation. Interacts with HDAC4, HDAC9 and SLC2A4RG. Interacts (via the N-terminal) with MAPK7; the interaction results in the phosphorylation and transcriptional activity of MEF2A. Constitutive phosphorylation on Ser-408 promotes Lys-403 sumoylation thus preventing acetylation at this site. Dephosphorylation on Ser-408 by PPP3CA upon neuron depolarization promotes a switch from sumoylation to acetylation on residue Lys-403 leading to inhibition of dendrite claw differentiation. Phosphorylation on Thr-312 and Thr-319 are the main sites involved in p38 MAPK signaling and activate transcription. Phosphorylated on these sites by MAPK14/p38alpha and MAPK11/p38beta, but not by MAPK13/p38delta nor by MAPK12/p38gamma. Phosphorylation on Ser-408 by CDK5 induced by neurotoxicity inhibits MEF2A transcriptional activation leading to apoptosis of cortical neurons. Phosphorylation on Thr-312, Thr-319 and Ser-355 can be induced by EGF. Post-translationally, sumoylation on Lys-403 is enhanced by PIAS1 and represses transcriptional activity. Phosphorylation on Ser-408 is required for sumoylation. Has no effect on nuclear location nor on DNA binding. Sumoylated with SUMO1 and, to a lesser extent with SUMO2 and SUMO3. PIASx facilitates sumoylation in postsynaptic dendrites in the cerebellar cortex and promotes their morphogenesis. In terms of processing, acetylation on Lys-403 activates transcriptional activity. Acetylated by p300 on several sites in diffentiating myocytes. Acetylation on Lys-4 increases DNA binding and transactivation. Hyperacetylation by p300 leads to enhanced cardiac myocyte growth and heart failure. Proteolytically cleaved on several sites by caspase 3 and caspase 7 following neurotoxicity. Preferentially cleaves the CDK5-mediated hyperphosphorylated form which leads to cortical neuron apoptosis and transcriptional inactivation.

It localises to the nucleus. Functionally, transcriptional activator which binds specifically to the MEF2 element, 5'-YTA[AT](4)TAR-3', found in numerous muscle-specific genes. Also involved in the activation of numerous growth factor- and stress-induced genes. Mediates cellular functions not only in skeletal and cardiac muscle development, but also in neuronal differentiation and survival. Plays diverse roles in the control of cell growth, survival and apoptosis via p38 MAPK signaling in muscle-specific and/or growth factor-related transcription. In cerebellar granule neurons, phosphorylated and sumoylated MEF2A represses transcription of NUR77 promoting synaptic differentiation. Associates with chromatin to the ZNF16 promoter. This chain is Myocyte-specific enhancer factor 2A (MEF2A), found in Sus scrofa (Pig).